The primary structure comprises 372 residues: 4-hydroxy-3-methylbut-2-en-1-yl diphosphate synthase (flavodoxin) (372 aa).

[4Fe-4S] cluster contacts are provided by Cys270, Cys273, Cys305, and Glu312.

It belongs to the IspG family. [4Fe-4S] cluster is required as a cofactor.

The catalysed reaction is (2E)-4-hydroxy-3-methylbut-2-enyl diphosphate + oxidized [flavodoxin] + H2O + 2 H(+) = 2-C-methyl-D-erythritol 2,4-cyclic diphosphate + reduced [flavodoxin]. The protein operates within isoprenoid biosynthesis; isopentenyl diphosphate biosynthesis via DXP pathway; isopentenyl diphosphate from 1-deoxy-D-xylulose 5-phosphate: step 5/6. In terms of biological role, converts 2C-methyl-D-erythritol 2,4-cyclodiphosphate (ME-2,4cPP) into 1-hydroxy-2-methyl-2-(E)-butenyl 4-diphosphate. This is 4-hydroxy-3-methylbut-2-en-1-yl diphosphate synthase (flavodoxin) from Salmonella choleraesuis (strain SC-B67).